The following is a 299-amino-acid chain: MRRQLGSDAGLTARMFLTMFLLAALYLFFLAVLWQAGVSYTGIIVFVAIMLGVQYYFSDRMVLWSMGAKEVSPREAPELHALVERLAALADLPKPRVAIVPTPMPNAFATGRNPANAVVAVTTGLMERLTPSELEAVLGHELTHVKNRDMTVLTLASFFATVASFIVQNFFYWGGAFGGGRDRDERNNIMLVYLASLVVWLVSYFLIRALSRYREFAADRGSAILTGSPGQLASALVKISGSMARIPTRDLRQAEAFNAFFIIPALNGNSIMELFSTHPSLERRLAYLRRLEQEMEERR.

2 consecutive transmembrane segments (helical) span residues 15-35 (MFLTMFLLAALYLFFLAVLWQ) and 37-57 (GVSYTGIIVFVAIMLGVQYYF). Zn(2+) is bound at residue H140. E141 is an active-site residue. A Zn(2+)-binding site is contributed by H144. The next 2 membrane-spanning stretches (helical) occupy residues 158 to 178 (FFATVASFIVQNFFYWGGAFG) and 187 to 207 (NNIMLVYLASLVVWLVSYFLI). E215 lines the Zn(2+) pocket.

Belongs to the peptidase M48B family. Zn(2+) is required as a cofactor.

It is found in the cell membrane. The sequence is that of Protease HtpX homolog from Moorella thermoacetica (strain ATCC 39073 / JCM 9320).